The primary structure comprises 201 residues: Adenylyl-sulfate kinase (201 aa).

A disordered region spans residues 1–23 (MALHDENVVWHSHPVTPQQREQH). 35–42 (GLSGSGKS) is a binding site for ATP. S109 (phosphoserine intermediate) is an active-site residue.

This sequence belongs to the APS kinase family.

The enzyme catalyses adenosine 5'-phosphosulfate + ATP = 3'-phosphoadenylyl sulfate + ADP + H(+). It functions in the pathway sulfur metabolism; hydrogen sulfide biosynthesis; sulfite from sulfate: step 2/3. Functionally, catalyzes the synthesis of activated sulfate. The polypeptide is Adenylyl-sulfate kinase (Escherichia coli O6:K15:H31 (strain 536 / UPEC)).